Reading from the N-terminus, the 270-residue chain is Catechol 1,2-dioxygenase (270 aa).

Fe cation-binding residues include tyrosine 152, tyrosine 186, histidine 210, and histidine 212.

It belongs to the intradiol ring-cleavage dioxygenase family. It depends on Fe(3+) as a cofactor.

It carries out the reaction catechol + O2 = cis,cis-muconate + 2 H(+). This is Catechol 1,2-dioxygenase (catA) from Rhodococcus opacus (Nocardia opaca).